A 236-amino-acid polypeptide reads, in one-letter code: Orotidine 5'-phosphate decarboxylase (236 aa).

Substrate contacts are provided by residues D16, K38, 65-74 (DLKLHDIGNT), T123, R184, Q193, G213, and R214. The Proton donor role is filled by K67.

The protein belongs to the OMP decarboxylase family. Type 1 subfamily. Homodimer.

The catalysed reaction is orotidine 5'-phosphate + H(+) = UMP + CO2. The protein operates within pyrimidine metabolism; UMP biosynthesis via de novo pathway; UMP from orotate: step 2/2. Functionally, catalyzes the decarboxylation of orotidine 5'-monophosphate (OMP) to uridine 5'-monophosphate (UMP). This chain is Orotidine 5'-phosphate decarboxylase, found in Methylobacterium nodulans (strain LMG 21967 / CNCM I-2342 / ORS 2060).